Consider the following 452-residue polypeptide: Zinc finger protein GAI-ASSOCIATED FACTOR 1 (452 aa).

Positions 1-32 (MPVDLDNSSTVSGEASVSISSTGNQNPLPNST) are enriched in polar residues. A disordered region spans residues 1–47 (MPVDLDNSSTVSGEASVSISSTGNQNPLPNSTGKKKRNLPGMPDPES). Ser53 bears the Phosphoserine mark. 2 C2H2-type zinc fingers span residues 63–85 (FVCE…RRGH) and 104–134 (YVCP…CRKH). A Nuclear localization signal motif is present at residues 126-133 (IKKHFCRK). The C2H2-type 2; degenerate zinc-finger motif lies at 139 to 162 (WKCDKCSKKYAVQSDWKAHSKICG). Residues Cys141, Cys144, His157, Cys161, Cys168, Cys170, His183, and Cys187 each contribute to the Zn(2+) site. The CCHC-type 2; atypical zinc-finger motif lies at 166 to 189 (YKCDCGTLFSRRDSFITHRAFCDA). The tract at residues 176–188 (RRDSFITHRAFCD) is SHR-binding. Residues 196–254 (RSHHSQSKKQNPEILTRKNPVPNPVPAPVDTESAKIKSSSTLTIKQSESPKTPPEIVQE) are disordered. Over residues 231-245 (IKSSSTLTIKQSESP) the composition is skewed to polar residues.

In terms of assembly, interacts with the DELLA proteins (e.g. GAI/RGA2, RGA, RGL1, RGL2 and RGLG3), acting as coactivators and with TPR1 and TPR4, acting as a corepressors, at the promoter of GA20OX2 gene. In terms of tissue distribution, observed in vegetative tissues. Mainly expressed in hypocotyls, petioles, shoot apices, root tips, and trichomes, and, at low levels, in leaves, stems and flowers.

It is found in the nucleus. Its activity is regulated as follows. Transcription activation is repressed by gibberellic acid GA(3) in the presence of TPR4. In terms of biological role, transcription factor that acts as a positive regulator of gibberellin (GA) action, homeostasis and signaling. GA converts the GAF1 complex from transcriptional activator to repressor via the degradation of DELLA proteins. This Arabidopsis thaliana (Mouse-ear cress) protein is Zinc finger protein GAI-ASSOCIATED FACTOR 1.